We begin with the raw amino-acid sequence, 111 residues long: DNA-binding protein MTH_1615 (111 aa).

Belongs to the PDCD5 family.

Its function is as follows. DNA-binding protein which can interact with a randomly chosen 20-mer of double-stranded DNA. The protein is DNA-binding protein MTH_1615 of Methanothermobacter thermautotrophicus (strain ATCC 29096 / DSM 1053 / JCM 10044 / NBRC 100330 / Delta H) (Methanobacterium thermoautotrophicum).